Here is a 562-residue protein sequence, read N- to C-terminus: MNINVANLLNGNYILLLFVVLALGLCLGKLRLGSIQLGNAIGVLVVSLLLGQQHFAINTEALNLGFMLFIFCVGVEAGPNFFSIFFRDGKNYLMLALVMVGSAMILALGLGKLFGWDIGLTAGMLAGSMTSTPVLVGAGDTLRHTMANGSSLQQAQDNLSLGYALTYLIGLVSLILGARYLPKLQHQDLPTSAQQIARERGLDTDSQRKVYLPVIRAYRVGPELVAWADGKNLRELGIYRQTGCYIERIRRNGILANPDGDAVLQVGDEISLVGYPDAHSRLDPSFRNGKEVFDRDLLDMRIVTEEIVVKNSNAVGKRLSHLKLTDHGCFLNRVIRSQIEMPIDDNVVLNKGDVLQVSGDARRVKSVAEKIGFISIHSQVTDLLAFCSFFILGLMIGLITFQFSNFSFGIGNAAGLLLAGIMLGFLRANHPTFGYIPQGALNMVKEFGLMVFMAGVGLSAGGGINSSLGAVGGQMLISGLIVSLVPVVICFVFGAYVLRMNRALLFGAIMGARTCAPAMDIISDTARSNIPALGYAGTYAIANVLLTLAGSLIVILWPGILG.

The next 6 helical transmembrane spans lie at 8-28, 37-57, 66-86, 94-114, 118-138, and 158-178; these read LLNG…LCLG, LGNA…HFAI, FMLF…SIFF, MLAL…GKLF, IGLT…LVGA, and NLSL…ILGA. RCK C-terminal domains lie at 202 to 288 and 290 to 373; these read LDTD…SFRN and KEVF…KIGF. The next 5 helical transmembrane spans lie at 383 to 403, 406 to 426, 447 to 467, 475 to 495, and 541 to 561; these read LLAF…TFQF, FSFG…LGFL, FGLM…INSS, MLIS…VFGA, and IANV…PGIL.

Belongs to the AAE transporter (TC 2.A.81) family. YbjL subfamily.

It is found in the cell membrane. This chain is Putative transport protein YPA_0617, found in Yersinia pestis bv. Antiqua (strain Antiqua).